A 262-amino-acid polypeptide reads, in one-letter code: Thiazole synthase (262 aa).

Catalysis depends on Lys96, which acts as the Schiff-base intermediate with DXP. Residues Gly157, 184–185 (AG), and 206–207 (NT) contribute to the 1-deoxy-D-xylulose 5-phosphate site.

Belongs to the ThiG family. In terms of assembly, homotetramer. Forms heterodimers with either ThiH or ThiS.

Its subcellular location is the cytoplasm. It carries out the reaction [ThiS sulfur-carrier protein]-C-terminal-Gly-aminoethanethioate + 2-iminoacetate + 1-deoxy-D-xylulose 5-phosphate = [ThiS sulfur-carrier protein]-C-terminal Gly-Gly + 2-[(2R,5Z)-2-carboxy-4-methylthiazol-5(2H)-ylidene]ethyl phosphate + 2 H2O + H(+). It functions in the pathway cofactor biosynthesis; thiamine diphosphate biosynthesis. Its function is as follows. Catalyzes the rearrangement of 1-deoxy-D-xylulose 5-phosphate (DXP) to produce the thiazole phosphate moiety of thiamine. Sulfur is provided by the thiocarboxylate moiety of the carrier protein ThiS. In vitro, sulfur can be provided by H(2)S. The protein is Thiazole synthase of Legionella pneumophila (strain Lens).